The primary structure comprises 388 residues: S-adenosylmethionine synthase (388 aa).

His-16 contacts ATP. Position 18 (Asp-18) interacts with Mg(2+). Glu-44 serves as a coordination point for K(+). L-methionine-binding residues include Glu-57 and Gln-100. Residues 100–110 (QSPDIAQGVDK) form a flexible loop region. Residues 167–169 (DAK), 233–234 (RF), Asp-242, 248–249 (RK), Ala-265, and Lys-269 contribute to the ATP site. Asp-242 lines the L-methionine pocket. Lys-273 is an L-methionine binding site.

This sequence belongs to the AdoMet synthase family. Homotetramer; dimer of dimers. It depends on Mg(2+) as a cofactor. Requires K(+) as cofactor.

The protein localises to the cytoplasm. The catalysed reaction is L-methionine + ATP + H2O = S-adenosyl-L-methionine + phosphate + diphosphate. Its pathway is amino-acid biosynthesis; S-adenosyl-L-methionine biosynthesis; S-adenosyl-L-methionine from L-methionine: step 1/1. Functionally, catalyzes the formation of S-adenosylmethionine (AdoMet) from methionine and ATP. The overall synthetic reaction is composed of two sequential steps, AdoMet formation and the subsequent tripolyphosphate hydrolysis which occurs prior to release of AdoMet from the enzyme. The protein is S-adenosylmethionine synthase of Polynucleobacter asymbioticus (strain DSM 18221 / CIP 109841 / QLW-P1DMWA-1) (Polynucleobacter necessarius subsp. asymbioticus).